The primary structure comprises 475 residues: MEIOTIC F-BOX protein MOF (475 aa).

The segment at 1-58 (MRRERDATQIPENPMEGIPQTAAAAAAAAAAEASEPPRKRARVDGGGGGAGEEEEDRL) is disordered. The span at 22-33 (AAAAAAAAAAEA) shows a compositional bias: low complexity. The 37-residue stretch at 55–91 (EDRLSDLPDCLLEDILAHLGSRQAVQTSVLSRRWRNL) folds into the F-box domain.

The protein belongs to the F-box protein family. FBX subfamily. In terms of assembly, part of a SCF (SKP1-CUL1-F-box protein) E3 ubiquitin-protein ligase complex. Interacts (via F-box domain) directly with SKP1. In terms of tissue distribution, highly expressed in the stem, leaf and in the anther during meiosis. Weakly expressed in roots and lemma/palea.

Its subcellular location is the nucleus. The protein resides in the chromosome. The protein operates within protein modification; protein ubiquitination. Probable component of a SCF (SKP1-CULLIN-F-box protein) E3 ubiquitin-protein ligase complex and may function through the ubiquitin-mediated protein degradation or signaling pathway. Required for male meiotic prophase I progression. Required for telomere bouquet formation, homologous chromosome pairing and for the formation of the synaptonemal complex (SC), which stabilizes initial chromosomal axial associations and promotes crossover formation. Involved in meiotic DNA double-strand break (DSB) end-processing and repair, and is important in the recruitment of DSB repair proteins to the DSB sites. The polypeptide is MEIOTIC F-BOX protein MOF (Oryza sativa subsp. japonica (Rice)).